Consider the following 682-residue polypeptide: Methionine--tRNA ligase (682 aa).

The short motif at 14–24 (PYANGPVHLGH) is the 'HIGH' region element. The Zn(2+) site is built by C145, C148, C158, and C161. Residues 331–335 (KMSKS) carry the 'KMSKS' region motif. Position 334 (K334) interacts with ATP. Residues 580–682 (AFAAVDLRVA…SGAKPGQRIK (103 aa)) enclose the tRNA-binding domain.

It belongs to the class-I aminoacyl-tRNA synthetase family. MetG type 1 subfamily. In terms of assembly, homodimer. The cofactor is Zn(2+).

It localises to the cytoplasm. The catalysed reaction is tRNA(Met) + L-methionine + ATP = L-methionyl-tRNA(Met) + AMP + diphosphate. Is required not only for elongation of protein synthesis but also for the initiation of all mRNA translation through initiator tRNA(fMet) aminoacylation. The sequence is that of Methionine--tRNA ligase from Pseudomonas syringae pv. tomato (strain ATCC BAA-871 / DC3000).